Consider the following 211-residue polypeptide: Transcriptional regulator GfcR (211 aa).

Belongs to the purine/pyrimidine phosphoribosyltransferase family. GfcR subfamily.

The polypeptide is Transcriptional regulator GfcR (Methanocaldococcus jannaschii (strain ATCC 43067 / DSM 2661 / JAL-1 / JCM 10045 / NBRC 100440) (Methanococcus jannaschii)).